The primary structure comprises 131 residues: Large ribosomal subunit protein bL19 (131 aa).

A compositionally biased stretch (basic and acidic residues) spans 111 to 124 (RIAERAERGSEKGK). Positions 111-131 (RIAERAERGSEKGKTTPAAAE) are disordered.

The protein belongs to the bacterial ribosomal protein bL19 family.

In terms of biological role, this protein is located at the 30S-50S ribosomal subunit interface and may play a role in the structure and function of the aminoacyl-tRNA binding site. The protein is Large ribosomal subunit protein bL19 of Methylobacterium nodulans (strain LMG 21967 / CNCM I-2342 / ORS 2060).